The following is a 253-amino-acid chain: Ubiquinone biosynthesis O-methyltransferase (253 aa).

Arg47, Gly78, Asp99, and Met141 together coordinate S-adenosyl-L-methionine.

The protein belongs to the methyltransferase superfamily. UbiG/COQ3 family.

It carries out the reaction a 3-demethylubiquinol + S-adenosyl-L-methionine = a ubiquinol + S-adenosyl-L-homocysteine + H(+). It catalyses the reaction a 3-(all-trans-polyprenyl)benzene-1,2-diol + S-adenosyl-L-methionine = a 2-methoxy-6-(all-trans-polyprenyl)phenol + S-adenosyl-L-homocysteine + H(+). The protein operates within cofactor biosynthesis; ubiquinone biosynthesis. Its function is as follows. O-methyltransferase that catalyzes the 2 O-methylation steps in the ubiquinone biosynthetic pathway. The chain is Ubiquinone biosynthesis O-methyltransferase from Rhodopseudomonas palustris (strain BisB5).